Here is a 929-residue protein sequence, read N- to C-terminus: Protein translocase subunit SecA (929 aa).

Residues Gln83, 101–105 (GEGKT), and Asp491 contribute to the ATP site.

Belongs to the SecA family. In terms of assembly, monomer and homodimer. Part of the essential Sec protein translocation apparatus which comprises SecA, SecYEG and auxiliary proteins SecDF. Other proteins may also be involved.

It is found in the cell inner membrane. It localises to the cellular thylakoid membrane. Its subcellular location is the cytoplasm. The catalysed reaction is ATP + H2O + cellular proteinSide 1 = ADP + phosphate + cellular proteinSide 2.. Its function is as follows. Part of the Sec protein translocase complex. Interacts with the SecYEG preprotein conducting channel. Has a central role in coupling the hydrolysis of ATP to the transfer of proteins into and across the cell membrane, serving as an ATP-driven molecular motor driving the stepwise translocation of polypeptide chains across the membrane. Functionally, probably participates in protein translocation into and across both the cytoplasmic and thylakoid membranes in cyanobacterial cells. This Thermosynechococcus vestitus (strain NIES-2133 / IAM M-273 / BP-1) protein is Protein translocase subunit SecA.